The primary structure comprises 497 residues: UPF0371 protein cu0538 (497 aa).

It belongs to the UPF0371 family.

This chain is UPF0371 protein cu0538, found in Corynebacterium urealyticum (strain ATCC 43042 / DSM 7109).